The primary structure comprises 230 residues: Ribonuclease 3 (230 aa).

The 130-residue stretch at 5 to 134 (EALLENSFNI…FLGALLLDKG (130 aa)) folds into the RNase III domain. Position 47 (glutamate 47) interacts with Mg(2+). Residue aspartate 51 is part of the active site. Residues aspartate 120 and glutamate 123 each contribute to the Mg(2+) site. Glutamate 123 is an active-site residue. Residues 160 to 229 (DYKTCLQELL…AKNALAQLSE (70 aa)) form the DRBM domain.

It belongs to the ribonuclease III family. In terms of assembly, homodimer. Requires Mg(2+) as cofactor.

It localises to the cytoplasm. The enzyme catalyses Endonucleolytic cleavage to 5'-phosphomonoester.. In terms of biological role, digests double-stranded RNA. Involved in the processing of primary rRNA transcript to yield the immediate precursors to the large and small rRNAs (23S and 16S). Processes some mRNAs, and tRNAs when they are encoded in the rRNA operon. Processes pre-crRNA and tracrRNA of type II CRISPR loci if present in the organism. The chain is Ribonuclease 3 from Streptococcus equi subsp. zooepidemicus (strain H70).